Here is a 471-residue protein sequence, read N- to C-terminus: NADH-quinone oxidoreductase subunit N 1 (471 aa).

14 consecutive transmembrane segments (helical) span residues 11-31, 39-59, 81-101, 105-125, 127-147, 162-182, 200-220, 234-254, 270-290, 296-316, 324-344, 365-385, 398-418, and 444-464; these read ALVP…AGAW, TIHV…ALAA, AIVL…VAGH, TEFV…AGAG, LIML…LAGW, LAGA…FGVA, AAAA…AGAV, PPPV…VAFY, LITA…AFAQ, MLGY…AVAG, ALLL…AVVA, ALAL…AVFV, GLAW…FYYL, and AVAL…GIVL.

The protein belongs to the complex I subunit 2 family. In terms of assembly, NDH-1 is composed of 14 different subunits. Subunits NuoA, H, J, K, L, M, N constitute the membrane sector of the complex.

The protein resides in the cell membrane. It carries out the reaction a quinone + NADH + 5 H(+)(in) = a quinol + NAD(+) + 4 H(+)(out). Functionally, NDH-1 shuttles electrons from NADH, via FMN and iron-sulfur (Fe-S) centers, to quinones in the respiratory chain. The immediate electron acceptor for the enzyme in this species is believed to be a menaquinone. Couples the redox reaction to proton translocation (for every two electrons transferred, four hydrogen ions are translocated across the cytoplasmic membrane), and thus conserves the redox energy in a proton gradient. This Streptomyces griseus subsp. griseus (strain JCM 4626 / CBS 651.72 / NBRC 13350 / KCC S-0626 / ISP 5235) protein is NADH-quinone oxidoreductase subunit N 1.